We begin with the raw amino-acid sequence, 94 residues long: Signal peptidase complex subunit 1 (94 aa).

The residue at position 2 (Ser-2) is an N-acetylserine. Topologically, residues 2–28 (SEILQDVQRKLVFPIDFPSQRKTEKFQ) are cytoplasmic. Residues 29-49 (QLSLMIGALVACILGFAQQSL) form a helical membrane-spanning segment. Residue Lys-50 is a topological domain, lumenal. The chain crosses the membrane as a helical span at residues 51–71 (VLLTAYGISCVITLICVLPAY). The Cytoplasmic portion of the chain corresponds to 72 to 94 (PWYNKQKLRWAQPKIEINVDQYD).

This sequence belongs to the SPCS1 family. Component of the signal peptidase complex (SPC) composed of a catalytic subunit SEC11 and three accessory subunits SPC1, SPC2 and SPC3. The complex induces a local thinning of the ER membrane which is used to measure the length of the signal peptide (SP) h-region of protein substrates. This ensures the selectivity of the complex towards h-regions shorter than 18-20 amino acids. SPC associates with the translocon complex. Interacts with SBH1 and SEB2/SBH2.

Its subcellular location is the endoplasmic reticulum membrane. Component of the signal peptidase complex (SPC) which catalyzes the cleavage of N-terminal signal sequences from nascent proteins as they are translocated into the lumen of the endoplasmic reticulum. Dispensable for SPC enzymatic activity. This is Signal peptidase complex subunit 1 (SPC1) from Saccharomyces cerevisiae (strain ATCC 204508 / S288c) (Baker's yeast).